The primary structure comprises 358 residues: DNA polymerase IV (358 aa).

Residues 6-187 (IIHIDMDYFF…LDIGDFPGVG (182 aa)) form the UmuC domain. The Mg(2+) site is built by Asp10 and Asp105. Glu106 is an active-site residue.

It belongs to the DNA polymerase type-Y family. In terms of assembly, monomer. It depends on Mg(2+) as a cofactor.

Its subcellular location is the cytoplasm. It catalyses the reaction DNA(n) + a 2'-deoxyribonucleoside 5'-triphosphate = DNA(n+1) + diphosphate. Its function is as follows. Poorly processive, error-prone DNA polymerase involved in untargeted mutagenesis. Copies undamaged DNA at stalled replication forks, which arise in vivo from mismatched or misaligned primer ends. These misaligned primers can be extended by PolIV. Exhibits no 3'-5' exonuclease (proofreading) activity. May be involved in translesional synthesis, in conjunction with the beta clamp from PolIII. In Staphylococcus haemolyticus (strain JCSC1435), this protein is DNA polymerase IV.